Here is a 376-residue protein sequence, read N- to C-terminus: Putative clathrin assembly protein At1g25240 (376 aa).

The ENTH domain occupies K25–R156.

It localises to the membrane. The protein localises to the clathrin-coated pit. Its subcellular location is the golgi apparatus. It is found in the cytoplasmic vesicle. The protein resides in the clathrin-coated vesicle. The polypeptide is Putative clathrin assembly protein At1g25240 (Arabidopsis thaliana (Mouse-ear cress)).